Here is a 219-residue protein sequence, read N- to C-terminus: Endonuclease V (219 aa).

Mg(2+) is bound by residues D41 and D107.

It belongs to the endonuclease V family. The cofactor is Mg(2+).

It is found in the cytoplasm. It catalyses the reaction Endonucleolytic cleavage at apurinic or apyrimidinic sites to products with a 5'-phosphate.. In terms of biological role, DNA repair enzyme involved in the repair of deaminated bases. Selectively cleaves double-stranded DNA at the second phosphodiester bond 3' to a deoxyinosine leaving behind the intact lesion on the nicked DNA. The chain is Endonuclease V from Desulfurococcus amylolyticus (strain DSM 18924 / JCM 16383 / VKM B-2413 / 1221n) (Desulfurococcus kamchatkensis).